The chain runs to 230 residues: Ureidoacrylate amidohydrolase RutB (230 aa).

Asp-24 acts as the Proton acceptor in catalysis. Residue Lys-133 is part of the active site. Cys-166 functions as the Nucleophile in the catalytic mechanism.

Belongs to the isochorismatase family. RutB subfamily.

The catalysed reaction is (Z)-3-ureidoacrylate + H2O + H(+) = (Z)-3-aminoacrylate + NH4(+) + CO2. It carries out the reaction (Z)-3-ureidoacrylate + H2O = (Z)-3-aminoacrylate + carbamate + H(+). The enzyme catalyses (Z)-2-methylureidoacrylate + H2O + H(+) = (Z)-2-methylaminoacrylate + NH4(+) + CO2. Functionally, hydrolyzes ureidoacrylate to form aminoacrylate and carbamate. The carbamate hydrolyzes spontaneously, thereby releasing one of the nitrogen atoms of the pyrimidine ring as ammonia and one of its carbon atoms as CO2. The protein is Ureidoacrylate amidohydrolase RutB of Escherichia coli O6:K15:H31 (strain 536 / UPEC).